The following is a 633-amino-acid chain: ATP-dependent rRNA helicase SPB4 (633 aa).

Residues 11 to 39 (FSALTPALSEWIIDAVDAMGFVKTTPVQH) carry the Q motif motif. A Helicase ATP-binding domain is found at 42-253 (IPMFMKNSDV…RVGLRNPVRI (212 aa)). 55-62 (AVTGSGKT) contacts ATP. The segment covering 119–131 (EPDDEDTDMEDAD) has biased composition (acidic residues). The segment at 119-140 (EPDDEDTDMEDADTPPKPTFPP) is disordered. Residues 201–204 (DEAD) carry the DEAD box motif. Positions 292–446 (AMKKILSSLQ…EITVTDEDAK (155 aa)) constitute a Helicase C-terminal domain. The stretch at 530–629 (AYKDKAREKL…KQEAEDADFE (100 aa)) forms a coiled coil. Basic and acidic residues-rich tracts occupy residues 547–581 (DKEE…EVRR) and 588–623 (REHE…KQEA). The segment at 547–633 (DKEEGTKKKQ…EDADFEGFSD (87 aa)) is disordered. The span at 624-633 (EDADFEGFSD) shows a compositional bias: acidic residues.

The protein belongs to the DEAD box helicase family. DDX55/SPB4 subfamily. In terms of assembly, component of pre-60S ribosomal complexes.

The protein resides in the nucleus. The protein localises to the nucleolus. It catalyses the reaction ATP + H2O = ADP + phosphate + H(+). Its function is as follows. ATP-binding RNA helicase involved in the biogenesis of 60S ribosomal subunits. Binds 90S pre-ribosomal particles and dissociates from pre-60S ribosomal particles after processing of 27SB pre-rRNA. Required for the normal formation of 18S rRNA through the processing of pre-rRNAs at sites A0, A1 and A2, and the normal formation of 25S and 5.8S rRNAs through the processing of pre-rRNAs at sites C1 and C2. This chain is ATP-dependent rRNA helicase SPB4, found in Phaeosphaeria nodorum (strain SN15 / ATCC MYA-4574 / FGSC 10173) (Glume blotch fungus).